Consider the following 1488-residue polypeptide: Chromosome partition protein MukB (1488 aa).

Residue 34–41 (GGNGAGKS) coordinates ATP. Coiled-coil stretches lie at residues 326–418 (LEAD…QYNQ), 444–472 (LDTFQAKEQEATEKLLSLEQKMSVAQTAH), and 509–602 (RHLA…QRAP). Residues 666–783 (PGGAEDQRLN…SLPIFGRAAR (118 aa)) are flexible hinge. Coiled-coil stretches lie at residues 835–923 (EAEI…AKLE), 977–1116 (EMLS…AKAG), and 1209–1265 (VEAI…LQSV). A disordered region spans residues 1049–1074 (ADSGAEERARQRRDELHAQLSNNRSR). Residues 1051-1065 (SGAEERARQRRDELH) are compositionally biased toward basic and acidic residues.

The protein belongs to the SMC family. MukB subfamily. Homodimerization via its hinge domain. Binds to DNA via its C-terminal region. Interacts, and probably forms a ternary complex, with MukE and MukF via its C-terminal region. The complex formation is stimulated by calcium or magnesium. Interacts with tubulin-related protein FtsZ.

Its subcellular location is the cytoplasm. The protein localises to the nucleoid. Functionally, plays a central role in chromosome condensation, segregation and cell cycle progression. Functions as a homodimer, which is essential for chromosome partition. Involved in negative DNA supercoiling in vivo, and by this means organize and compact chromosomes. May achieve or facilitate chromosome segregation by condensation DNA from both sides of a centrally located replisome during cell division. The sequence is that of Chromosome partition protein MukB from Salmonella arizonae (strain ATCC BAA-731 / CDC346-86 / RSK2980).